The following is a 577-amino-acid chain: Nuclear receptor subfamily 4 group A member 1 (577 aa).

The segment at residues glutamate 243–threonine 318 is a DNA-binding region (nuclear receptor). 2 consecutive NR C4-type zinc fingers follow at residues cysteine 246–cysteine 266 and cysteine 282–methionine 311. Residues alanine 247–lysine 333 form a required for binding NBRE-containing DNA region. The NR LBD domain maps to serine 339–threonine 574. The segment at proline 500–asparagine 523 is may bind lipopolysaccharide. The segment at proline 563–threonine 574 is AF-2.

This sequence belongs to the nuclear hormone receptor family. NR4 subfamily. Zn(2+) serves as cofactor.

It is found in the nucleus. The protein localises to the cytoplasm. The protein resides in the cytosol. Its function is as follows. Orphan nuclear receptor. Binds the NGFI-B response element (NBRE) 5'-AAAAGGTCA-3'. Functionally, in the cytosol, may detect bacterial lipopolysaccharide (LPS) and NBRE-containing mitochondrial DNA released during pyroptosis, and play a role in non-canonical inflammasome activation. This chain is Nuclear receptor subfamily 4 group A member 1 (nr4a1), found in Xenopus laevis (African clawed frog).